A 256-amino-acid chain; its full sequence is Protein YABBY 4 (256 aa).

Residues cysteine 30–cysteine 57 form a C4-type zinc finger. The disordered stretch occupies residues serine 127 to proline 168.

This sequence belongs to the YABBY family. Preferentially expressed in immature organs containing meristems and organ primordia. Expressed in phloem of developing vascular tissues of young seedling shoots. Expressed in the phloem of midvein vasculature of young leaves. Does not show polar expression pattern in leaf primordia.

It localises to the nucleus. In terms of biological role, seems to be associated with phloem cell differentiation. The chain is Protein YABBY 4 (YAB4) from Oryza sativa subsp. japonica (Rice).